Here is a 99-residue protein sequence, read N- to C-terminus: NADH-ubiquinone oxidoreductase chain 4L (99 aa).

The next 3 membrane-spanning stretches (helical) occupy residues 2-22, 27-47, and 59-79; these read YYRY…GIVL, LIIM…LFLI, and VFTI…LAIM.

This sequence belongs to the complex I subunit 4L family.

It is found in the mitochondrion membrane. It carries out the reaction a ubiquinone + NADH + 5 H(+)(in) = a ubiquinol + NAD(+) + 4 H(+)(out). In terms of biological role, core subunit of the mitochondrial membrane respiratory chain NADH dehydrogenase (Complex I) that is believed to belong to the minimal assembly required for catalysis. Complex I functions in the transfer of electrons from NADH to the respiratory chain. The immediate electron acceptor for the enzyme is believed to be ubiquinone. The sequence is that of NADH-ubiquinone oxidoreductase chain 4L (ND4L) from Metridium senile (Brown sea anemone).